The chain runs to 145 residues: Hemoglobin subunit beta-3 (145 aa).

The region spanning methionine 1 to histidine 145 is the Globin domain. Phosphothreonine is present on threonine 11. The residue at position 58 (lysine 58) is an N6-acetyllysine. Histidine 62 serves as a coordination point for heme b. The residue at position 81 (lysine 81) is an N6-acetyllysine. A heme b-binding site is contributed by histidine 91. Cysteine 92 carries the S-nitrosocysteine modification.

It belongs to the globin family. Heterotetramer of two alpha chains and two beta chains. As to expression, red blood cells.

In terms of biological role, involved in oxygen transport from the lung to the various peripheral tissues. The chain is Hemoglobin subunit beta-3 (HBB) from Odocoileus virginianus virginianus (Virginia white-tailed deer).